We begin with the raw amino-acid sequence, 275 residues long: Elongation factor Ts (275 aa).

The tract at residues T76–V79 is involved in Mg(2+) ion dislocation from EF-Tu.

This sequence belongs to the EF-Ts family.

It localises to the cytoplasm. In terms of biological role, associates with the EF-Tu.GDP complex and induces the exchange of GDP to GTP. It remains bound to the aminoacyl-tRNA.EF-Tu.GTP complex up to the GTP hydrolysis stage on the ribosome. The polypeptide is Elongation factor Ts (Rhodococcus erythropolis (strain PR4 / NBRC 100887)).